A 415-amino-acid polypeptide reads, in one-letter code: AP-3 complex subunit mu (415 aa).

Residues 178-414 (SNEVYVDLVE…QTRAGEFDVR (237 aa)) form the MHD domain.

It belongs to the adaptor complexes medium subunit family. In terms of assembly, adaptor protein complex 3 (AP-3) is a heterotetramer composed of two large adaptins (delta-type subunit and beta-type subunit), a medium adaptin (mu-type subunit) and a small adaptin (sigma-type subunit).

Its subcellular location is the cytoplasm. The protein resides in the golgi apparatus. It localises to the cytoplasmic vesicle membrane. Its function is as follows. Part of the AP-3 complex, an adaptor-related complex which seems to be clathrin-associated. The complex is associated with the Golgi region as well as more peripheral structures. It facilitates the budding of vesicles from the Golgi membrane and may be directly involved in trafficking to the vacuole. It also functions in maintaining the identity of lytic vacuoles and in regulating the transition between storage and lytic vacuoles. The protein is AP-3 complex subunit mu (AP3M) of Arabidopsis thaliana (Mouse-ear cress).